The chain runs to 135 residues: ATP synthase epsilon chain (135 aa).

Belongs to the ATPase epsilon chain family. F-type ATPases have 2 components, CF(1) - the catalytic core - and CF(0) - the membrane proton channel. CF(1) has five subunits: alpha(3), beta(3), gamma(1), delta(1), epsilon(1). CF(0) has three main subunits: a, b and c.

It localises to the cell inner membrane. In terms of biological role, produces ATP from ADP in the presence of a proton gradient across the membrane. This is ATP synthase epsilon chain from Rhodopseudomonas palustris (strain HaA2).